The primary structure comprises 517 residues: Cytochrome P450 monooxygenase 124 (517 aa).

A helical transmembrane segment spans residues 3 to 23 (SLLVLFVSLLALGALKKHLDF). C453 lines the heme pocket.

It belongs to the cytochrome P450 family. Heme is required as a cofactor.

Its subcellular location is the membrane. Its pathway is secondary metabolite biosynthesis. Functionally, cytochrome P450 monooxygenase that is able to use trans-stilbene as a substrate for oxidation. This chain is Cytochrome P450 monooxygenase 124, found in Postia placenta (strain ATCC 44394 / Madison 698-R) (Brown rot fungus).